The primary structure comprises 149 residues: Endoribonuclease YbeY (149 aa).

Zn(2+) is bound by residues His115, His119, and His125.

The protein belongs to the endoribonuclease YbeY family. Zn(2+) is required as a cofactor.

Its subcellular location is the cytoplasm. Functionally, single strand-specific metallo-endoribonuclease involved in late-stage 70S ribosome quality control and in maturation of the 3' terminus of the 16S rRNA. The protein is Endoribonuclease YbeY of Mycoplasmopsis pulmonis (strain UAB CTIP) (Mycoplasma pulmonis).